Reading from the N-terminus, the 79-residue chain is Immunity protein CdiI (79 aa).

The next 2 helical transmembrane spans lie at 12-32 and 51-71; these read IIFFPMLCTVLGLLGIPIGLI and VVLFTLKIGIPIGFILGLGLW.

As to quaternary structure, probably interacts with cognate toxin CdiA.

It localises to the cell inner membrane. Immunity protein component of a toxin-immunity protein module, which functions as a cellular contact-dependent growth inhibition (CDI) system. CDI modules allow bacteria to communicate with and inhibit the growth of closely related neighboring bacteria in a contact-dependent fashion. Protects cells against CdiA from the same strain, its cognate toxin protein. Growth inhibition is reversible upon induction of this protein, occurring about 2.5 hours after induction, and requires an energy source. Does not protect against non-cognate CdiA from E.coli strain 563 / UPEC, D.dadantii strain 3937 or Y.pestis strain CO92. The sequence is that of Immunity protein CdiI from Escherichia coli.